The chain runs to 194 residues: Protein LURP-one-related 10 (194 aa).

This sequence belongs to the LOR family.

Might be related to the phospholipid scramblase and tubby-like superfamily of membrane tethered transcription factors. The sequence is that of Protein LURP-one-related 10 from Arabidopsis thaliana (Mouse-ear cress).